The primary structure comprises 419 residues: S-adenosylmethionine synthase (419 aa).

ATP is bound at residue histidine 15. Aspartate 17 contributes to the Mg(2+) binding site. Glutamate 43 provides a ligand contact to K(+). L-methionine-binding residues include glutamate 56 and glutamine 100. Residues 100–110 form a flexible loop region; sequence QSPDIAQGVDE. ATP-binding positions include 171-173, 248-249, aspartate 257, 263-264, alanine 280, and lysine 284; these read DGK, KF, and RK. Aspartate 257 provides a ligand contact to L-methionine. Lysine 288 contributes to the L-methionine binding site.

Belongs to the AdoMet synthase family. In terms of assembly, homotetramer; dimer of dimers. Requires Mg(2+) as cofactor. The cofactor is K(+).

It localises to the cytoplasm. It catalyses the reaction L-methionine + ATP + H2O = S-adenosyl-L-methionine + phosphate + diphosphate. Its pathway is amino-acid biosynthesis; S-adenosyl-L-methionine biosynthesis; S-adenosyl-L-methionine from L-methionine: step 1/1. Its function is as follows. Catalyzes the formation of S-adenosylmethionine (AdoMet) from methionine and ATP. The overall synthetic reaction is composed of two sequential steps, AdoMet formation and the subsequent tripolyphosphate hydrolysis which occurs prior to release of AdoMet from the enzyme. This Synechococcus sp. (strain WH7803) protein is S-adenosylmethionine synthase.